A 377-amino-acid chain; its full sequence is Cytoplasmic tRNA 2-thiolation protein 1 (377 aa).

The protein belongs to the TtcA family. CTU1/NCS6/ATPBD3 subfamily.

It localises to the cytoplasm. The protein operates within tRNA modification; 5-methoxycarbonylmethyl-2-thiouridine-tRNA biosynthesis. Functionally, plays a central role in 2-thiolation of mcm(5)S(2)U at tRNA wobble positions of tRNA(Lys), tRNA(Glu) and tRNA(Gln). Directly binds tRNAs and probably acts by catalyzing adenylation of tRNAs, an intermediate required for 2-thiolation. It is unclear whether it acts as a sulfurtransferase that transfers sulfur from thiocarboxylated URM1 onto the uridine of tRNAs at wobble position. Prior mcm(5) tRNA modification by the elongator complex is required for 2-thiolation. May also be involved in protein urmylation. The protein is Cytoplasmic tRNA 2-thiolation protein 1 of Debaryomyces hansenii (strain ATCC 36239 / CBS 767 / BCRC 21394 / JCM 1990 / NBRC 0083 / IGC 2968) (Yeast).